A 72-amino-acid polypeptide reads, in one-letter code: Translation initiation factor IF-1 (72 aa).

An S1-like domain is found at 1-72 (MTKEEVLEFP…TKGRITYRFK (72 aa)).

It belongs to the IF-1 family. In terms of assembly, component of the 30S ribosomal translation pre-initiation complex which assembles on the 30S ribosome in the order IF-2 and IF-3, IF-1 and N-formylmethionyl-tRNA(fMet); mRNA recruitment can occur at any time during PIC assembly.

It is found in the cytoplasm. Its function is as follows. One of the essential components for the initiation of protein synthesis. Stabilizes the binding of IF-2 and IF-3 on the 30S subunit to which N-formylmethionyl-tRNA(fMet) subsequently binds. Helps modulate mRNA selection, yielding the 30S pre-initiation complex (PIC). Upon addition of the 50S ribosomal subunit IF-1, IF-2 and IF-3 are released leaving the mature 70S translation initiation complex. The protein is Translation initiation factor IF-1 of Agrobacterium fabrum (strain C58 / ATCC 33970) (Agrobacterium tumefaciens (strain C58)).